We begin with the raw amino-acid sequence, 303 residues long: Probable 5-dehydro-4-deoxyglucarate dehydratase (303 aa).

Belongs to the DapA family.

It catalyses the reaction 5-dehydro-4-deoxy-D-glucarate + H(+) = 2,5-dioxopentanoate + CO2 + H2O. The protein operates within carbohydrate acid metabolism; D-glucarate degradation; 2,5-dioxopentanoate from D-glucarate: step 2/2. The sequence is that of Probable 5-dehydro-4-deoxyglucarate dehydratase from Pseudomonas syringae pv. tomato (strain ATCC BAA-871 / DC3000).